We begin with the raw amino-acid sequence, 32 residues long: ilv operon leader peptide (32 aa).

The sequence is that of ilv operon leader peptide (ilvL) from Yersinia pestis.